Here is a 137-residue protein sequence, read N- to C-terminus: Large ribosomal subunit protein uL16 (137 aa).

Belongs to the universal ribosomal protein uL16 family. In terms of assembly, part of the 50S ribosomal subunit.

Functionally, binds 23S rRNA and is also seen to make contacts with the A and possibly P site tRNAs. This is Large ribosomal subunit protein uL16 from Cereibacter sphaeroides (strain ATCC 17025 / ATH 2.4.3) (Rhodobacter sphaeroides).